Consider the following 274-residue polypeptide: Penicillin-insensitive murein endopeptidase (274 aa).

A signal peptide spans 1-19; that stretch reads MNKTAIALLALLASSASLA. 3 cysteine pairs are disulfide-bonded: Cys44/Cys265, Cys187/Cys235, and Cys216/Cys223. Positions 110, 113, 120, 147, 150, and 211 each coordinate Zn(2+). Positions 227-274 are disordered; sequence PLPPPGDGCGAELQSWFEPPKPGTTKPEKKTPPPLPPSCQALLDEHVI.

The protein belongs to the peptidase M74 family. In terms of assembly, dimer. Requires Zn(2+) as cofactor.

It localises to the periplasm. In terms of biological role, murein endopeptidase that cleaves the D-alanyl-meso-2,6-diamino-pimelyl amide bond that connects peptidoglycan strands. Likely plays a role in the removal of murein from the sacculus. This Escherichia coli (strain ATCC 8739 / DSM 1576 / NBRC 3972 / NCIMB 8545 / WDCM 00012 / Crooks) protein is Penicillin-insensitive murein endopeptidase.